Reading from the N-terminus, the 220-residue chain is Exodeoxyribonuclease 10 (220 aa).

Requires Mg(2+) as cofactor.

Functionally, capable of degrading both single-strand and double-strand DNA with 3' to 5' polarity. Has higher affinity for ssDNA ends than for dsDNA. The chain is Exodeoxyribonuclease 10 (exoX) from Escherichia coli O6:H1 (strain CFT073 / ATCC 700928 / UPEC).